The sequence spans 445 residues: Tubulin beta-3 chain (445 aa).

The GTP site is built by Gln11, Glu69, Ser138, Gly142, Thr143, Gly144, Asn204, and Asn226. Mg(2+) is bound at residue Glu69. Residues 425 to 445 are disordered; sequence YQDATAEEYDEEEQDGEEEHD. Positions 429-445 are enriched in acidic residues; that stretch reads TAEEYDEEEQDGEEEHD.

Belongs to the tubulin family. Dimer of alpha and beta chains. A typical microtubule is a hollow water-filled tube with an outer diameter of 25 nm and an inner diameter of 15 nM. Alpha-beta heterodimers associate head-to-tail to form protofilaments running lengthwise along the microtubule wall with the beta-tubulin subunit facing the microtubule plus end conferring a structural polarity. Microtubules usually have 13 protofilaments but different protofilament numbers can be found in some organisms and specialized cells. Requires Mg(2+) as cofactor.

It localises to the cytoplasm. The protein resides in the cytoskeleton. Tubulin is the major constituent of microtubules, a cylinder consisting of laterally associated linear protofilaments composed of alpha- and beta-tubulin heterodimers. Microtubules grow by the addition of GTP-tubulin dimers to the microtubule end, where a stabilizing cap forms. Below the cap, tubulin dimers are in GDP-bound state, owing to GTPase activity of alpha-tubulin. This Zea mays (Maize) protein is Tubulin beta-3 chain (TUBB3).